Here is a 780-residue protein sequence, read N- to C-terminus: Cullin-1 (780 aa).

The Cullin neddylation domain maps to 710–771; the sequence is DRKSVISACI…EKEYMLRTEG (62 aa). Residue lysine 724 forms a Glycyl lysine isopeptide (Lys-Gly) (interchain with G-Cter in NEDD8) linkage.

This sequence belongs to the cullin family. As to quaternary structure, component of an SCF (SKP1-CUL1-F-box protein) E3 ubiquitin ligase complex composed of cul-1, fsn-1, rpm-1 and skr-1. Interacts with Skp1-related proteins skr-1, skr-2, skr-3, skr-4, skr-7, skr-8, skr-9 and skr-10. In terms of processing, neddylated; which enhances the ubiquitination activity of SCF. In terms of tissue distribution, ubiquitous.

It localises to the cytoplasm. It functions in the pathway protein modification; protein ubiquitination. Probable core component of multiple cullin-RING-based SCF (SKP1-CUL1-F-box) E3 ubiquitin-protein ligase complexes which mediate the ubiquitination and subsequent proteasomal degradation of target proteins. As a scaffold protein may contribute to catalysis through positioning of the substrate and the ubiquitin-conjugating enzyme. Required for developmentally programmed transitions from the G1 phase of the cell cycle to the G0 phase or the apoptotic pathway. The chain is Cullin-1 (cul-1) from Caenorhabditis elegans.